Consider the following 153-residue polypeptide: 6,7-dimethyl-8-ribityllumazine synthase (153 aa).

5-amino-6-(D-ribitylamino)uracil contacts are provided by residues phenylalanine 21, 55 to 57 (AFE), and 79 to 81 (TVI). 84–85 (AT) contacts (2S)-2-hydroxy-3-oxobutyl phosphate. Residue histidine 87 is the Proton donor of the active site. 5-amino-6-(D-ribitylamino)uracil is bound at residue phenylalanine 112. Residue arginine 126 participates in (2S)-2-hydroxy-3-oxobutyl phosphate binding.

It belongs to the DMRL synthase family. In terms of assembly, forms an icosahedral capsid composed of 60 subunits, arranged as a dodecamer of pentamers.

It catalyses the reaction (2S)-2-hydroxy-3-oxobutyl phosphate + 5-amino-6-(D-ribitylamino)uracil = 6,7-dimethyl-8-(1-D-ribityl)lumazine + phosphate + 2 H2O + H(+). It participates in cofactor biosynthesis; riboflavin biosynthesis; riboflavin from 2-hydroxy-3-oxobutyl phosphate and 5-amino-6-(D-ribitylamino)uracil: step 1/2. Its function is as follows. Catalyzes the formation of 6,7-dimethyl-8-ribityllumazine by condensation of 5-amino-6-(D-ribitylamino)uracil with 3,4-dihydroxy-2-butanone 4-phosphate. This is the penultimate step in the biosynthesis of riboflavin. The protein is 6,7-dimethyl-8-ribityllumazine synthase of Bacillus cereus (strain B4264).